Consider the following 369-residue polypeptide: Maltose/maltodextrin import ATP-binding protein MalK (369 aa).

The 231-residue stretch at 4–234 folds into the ABC transporter domain; the sequence is VTLRNVCKAY…PQNRFVAGFI (231 aa). Position 36–43 (36–43) interacts with ATP; that stretch reads GPSGCGKS.

The protein belongs to the ABC transporter superfamily. Maltooligosaccharide importer (TC 3.A.1.1.1) family. The complex is composed of two ATP-binding proteins (MalK), two transmembrane proteins (MalG and MalK) and a solute-binding protein (MalE).

The protein resides in the cell inner membrane. The catalysed reaction is D-maltose(out) + ATP + H2O = D-maltose(in) + ADP + phosphate + H(+). Part of the ABC transporter complex MalEFGK involved in maltose/maltodextrin import. Responsible for energy coupling to the transport system. This is Maltose/maltodextrin import ATP-binding protein MalK from Photobacterium profundum (strain SS9).